The following is a 741-amino-acid chain: HSP-interacting protein (741 aa).

TPR repeat units lie at residues 26–59 (SREL…LPAG), 65–100 (AHLR…VPRY), and 102–134 (RALL…EPGN). The tract at residues 168 to 270 (ASAKGEERKK…GESKQQKHSA (103 aa)) is disordered. Over residues 171 to 184 (KGEERKKSRNKRFD) the composition is skewed to basic and acidic residues. A compositionally biased stretch (polar residues) spans 201–218 (SASTEKQAGPRQTNGTGN). Residues 219–247 (HQDHTEDSESNGLEKLEQSTETGEKDMGK) are compositionally biased toward basic and acidic residues. Positions 248-258 (KRGAHAAGKKP) are enriched in basic residues. The PB1 domain maps to 285-364 (MKDVKLVFGE…VPIRFYVVEV (80 aa)). TPR repeat units lie at residues 496–530 (EFIL…KSDF), 532–557 (EGLI…ACKI), 558–591 (NMET…RLKG), and 628–663 (SHIN…AMEK).

Interacts (via C-terminus) with O1. Interacts (via C-terminus) with OP10 (via N-terminus).

Its function is as follows. Acts as a co-chaperone for HSP90 and is required for proper folding of the myosin motor domain. This chain is HSP-interacting protein, found in Zea mays (Maize).